A 329-amino-acid chain; its full sequence is DGAT1/2-independent enzyme synthesizing storage lipids (329 aa).

The Lumenal segment spans residues 1–50; it reads MIDNNQTCAAGQDSVPYVTCMIYVLEEWLGVEQLEDYLNFANHLLWVFTP. The N-linked (GlcNAc...) asparagine glycan is linked to asparagine 5. Residues 51 to 71 traverse the membrane as a helical segment; it reads LILLILPYFTIFLLYLTIIFL. Residues 72 to 120 lie on the Cytoplasmic side of the membrane; it reads HIYKRKNVLKEAYSHNLWDGARKTVATLWDGHAAVWHGYEVHGMEKIPE. Residues 121 to 141 traverse the membrane as a helical segment; the sequence is GAALIIFYHGAIPIDFYYFMA. Histidine 129 is an active-site residue. Residues 142-329 lie on the Lumenal side of the membrane; sequence KIFIQKGRTC…DRFHKEQKAH (188 aa).

It belongs to the diacylglycerol acyltransferase family. Highly divergent. As to expression, widely expressed, with highest level in the brain, followed by lung and duodenum, and lowest levels in tongue, testis, skin and ileum.

The protein localises to the endoplasmic reticulum membrane. It carries out the reaction a 1,2-diacylglycerol + a 1,2-diacyl-sn-glycero-3-phosphocholine = a triacylglycerol + a 1-acyl-sn-glycero-3-phosphocholine. The enzyme catalyses a 1-O-alkyl-2-acyl-sn-glycero-3-phosphocholine + a 1,2-diacylglycerol = a 1-O-alkyl-sn-glycero-3-phosphocholine + a triacylglycerol. The catalysed reaction is a 2-acylglycerol + an acyl-CoA = a 1,2-diacylglycerol + CoA. It catalyses the reaction an acyl-CoA + a 1,2-diacyl-sn-glycerol = a triacyl-sn-glycerol + CoA. It carries out the reaction 2-(9Z-octadecenoyl)-glycerol + (9Z)-octadecenoyl-CoA = 1,2-di-(9Z-octadecenoyl)-glycerol + CoA. The enzyme catalyses 1,2-di-(9Z-octadecenoyl)-sn-glycerol + (9Z)-octadecenoyl-CoA = 1,2,3-tri-(9Z-octadecenoyl)-glycerol + CoA. Its activity is regulated as follows. Acyltransferase activity is specifically inhibited by TMX1 at the endoplasmic reticulum, restricting accumulation of triacylglycerol. Its function is as follows. Catalytic subunit of the alternative triglyceride biosynthesis pathway, which mediates formation of triacylglycerol from diacylglycerol and membrane phospholipids. Synthesizes triacylglycerol at the expense of membrane phospholipids, such as phosphatidylcholine (PC) and its ether-linked form (ePC), thereby altering the composition of membranes. The alternative triglyceride biosynthesis pathway is probably required to provide the energy required for rapid growth when fuel sources are limiting. It maintains mitochondrial function during periods of extracellular lipid starvation. Can also use acyl-CoA as donor: acts as a acyl-CoA:monoacylglycerol acyltransferase (MGAT), but also shows acyl-CoA:diacylglycerol acyltransferase (DGAT) activity. The protein is DGAT1/2-independent enzyme synthesizing storage lipids of Mus musculus (Mouse).